Reading from the N-terminus, the 191-residue chain is Protein YceI (191 aa).

The N-terminal stretch at 1 to 22 (MKKSLLGLTFASLMFSAGSAVA) is a signal peptide.

Belongs to the UPF0312 family. Type 1 subfamily.

The protein resides in the periplasm. The protein is Protein YceI of Shigella flexneri.